The primary structure comprises 389 residues: Succinate--CoA ligase [ADP-forming] subunit beta (389 aa).

Residues 9 to 244 enclose the ATP-grasp domain; that stretch reads KQLLAEYGIP…KTQEDETEVT (236 aa). ATP is bound by residues lysine 46, 53–55, glycine 102, and glutamate 107; that span reads GRG. Residues asparagine 199 and aspartate 213 each coordinate Mg(2+). Residues asparagine 264 and 321-323 each bind substrate; that span reads GIV.

This sequence belongs to the succinate/malate CoA ligase beta subunit family. Heterotetramer of two alpha and two beta subunits. Mg(2+) serves as cofactor.

The catalysed reaction is succinate + ATP + CoA = succinyl-CoA + ADP + phosphate. It catalyses the reaction GTP + succinate + CoA = succinyl-CoA + GDP + phosphate. It functions in the pathway carbohydrate metabolism; tricarboxylic acid cycle; succinate from succinyl-CoA (ligase route): step 1/1. Its function is as follows. Succinyl-CoA synthetase functions in the citric acid cycle (TCA), coupling the hydrolysis of succinyl-CoA to the synthesis of either ATP or GTP and thus represents the only step of substrate-level phosphorylation in the TCA. The beta subunit provides nucleotide specificity of the enzyme and binds the substrate succinate, while the binding sites for coenzyme A and phosphate are found in the alpha subunit. The protein is Succinate--CoA ligase [ADP-forming] subunit beta of Xanthomonas axonopodis pv. citri (strain 306).